The primary structure comprises 532 residues: Flavin-containing monooxygenase 1 (532 aa).

The residue at position 2 (A2) is an N-acetylalanine. The Lumenal segment spans residues 2-510; sequence AKRVAIVGAG…ARVVQESPSP (509 aa). Residues 9 to 13, E32, 40 to 41, and 61 to 62 each bind FAD; these read GAGVS, LW, and NS. NADP(+)-binding positions include 60–61 and 195–198; these read SN and SGTD. A helical membrane pass occupies residues 511-531; the sequence is FESFLKVFSFLALLVAIFLIF. Position 532 (L532) is a topological domain, cytoplasmic.

This sequence belongs to the FMO family. Requires FAD as cofactor. In terms of tissue distribution, expressed mainly in fetal and adult liver.

Its subcellular location is the endoplasmic reticulum membrane. The catalysed reaction is hypotaurine + NADPH + O2 + H(+) = taurine + NADP(+) + H2O. The enzyme catalyses hypotaurine + NADH + O2 + H(+) = taurine + NAD(+) + H2O. It carries out the reaction trimethylamine + NADPH + O2 = trimethylamine N-oxide + NADP(+) + H2O. It catalyses the reaction N,N-dimethylaniline + NADPH + O2 + H(+) = N,N-dimethylaniline N-oxide + NADP(+) + H2O. In terms of biological role, broad spectrum monooxygenase that catalyzes the oxygenation of a wide variety of nitrogen- and sulfur-containing compounds including xenobiotics. Catalyzes the S-oxygenation of hypotaurine to produce taurine, an organic osmolyte involved in cell volume regulation as well as a variety of cytoprotective and developmental processes. In vitro, catalyzes the N-oxygenation of trimethylamine (TMA) to produce trimethylamine N-oxide (TMAO) and could therefore participate to the detoxification of this compound that is generated by the action of gut microbiota from dietary precursors such as choline, choline containing compounds, betaine or L-carnitine. The polypeptide is Flavin-containing monooxygenase 1 (Homo sapiens (Human)).